Here is a 136-residue protein sequence, read N- to C-terminus: Large ribosomal subunit protein bL19 (136 aa).

The interval methionine 1–threonine 23 is disordered. A compositionally biased stretch (acidic residues) spans glutamate 12–threonine 23.

The protein belongs to the bacterial ribosomal protein bL19 family.

Functionally, this protein is located at the 30S-50S ribosomal subunit interface and may play a role in the structure and function of the aminoacyl-tRNA binding site. This chain is Large ribosomal subunit protein bL19, found in Dehalococcoides mccartyi (strain ATCC BAA-2266 / KCTC 15142 / 195) (Dehalococcoides ethenogenes (strain 195)).